The following is a 177-amino-acid chain: Putative adenylate kinase (177 aa).

ATP is bound by residues glycine 10, glycine 12, lysine 13, threonine 14, and threonine 15. Positions 30–50 (NLRDYALEKGIGEMKENELEI) are NMP. The tract at residues 99-109 (ERGYGREKLGE) is LID. Positions 100 and 138 each coordinate ATP.

It belongs to the adenylate kinase family. AK6 subfamily. In terms of assembly, interacts with uS11. Not a structural component of 40S pre-ribosomes, but transiently interacts with them by binding to uS11.

The catalysed reaction is AMP + ATP = 2 ADP. It catalyses the reaction ATP + H2O = ADP + phosphate + H(+). Its function is as follows. Broad-specificity nucleoside monophosphate (NMP) kinase that catalyzes the reversible transfer of the terminal phosphate group between nucleoside triphosphates and monophosphates. Also has ATPase activity. Involved in the late maturation steps of the 30S ribosomal particles, specifically 16S rRNA maturation. While NMP activity is not required for ribosome maturation, ATPase activity is. Associates transiently with small ribosomal subunit protein uS11. ATP hydrolysis breaks the interaction with uS11. May temporarily remove uS11 from the ribosome to enable a conformational change of the ribosomal RNA that is needed for the final maturation step of the small ribosomal subunit. The protein is Putative adenylate kinase of Thermococcus kodakarensis (strain ATCC BAA-918 / JCM 12380 / KOD1) (Pyrococcus kodakaraensis (strain KOD1)).